A 145-amino-acid chain; its full sequence is U20-hexatoxin-Hi1a (145 aa).

A signal peptide spans 1-16 (MYQFLIIVILAAFVNG). Thyroglobulin type-1 domains lie at 20–73 (KTEC…GQPM) and 82–145 (ACEC…RLEC). Cystine bridges form between cysteine 23/cysteine 45, cysteine 56/cysteine 63, cysteine 85/cysteine 106, cysteine 117/cysteine 124, and cysteine 126/cysteine 145.

In terms of tissue distribution, expressed by the venom gland.

The protein resides in the secreted. Its function is as follows. Cysteine proteinase inhibitor. The protein is U20-hexatoxin-Hi1a of Hadronyche infensa (Fraser island funnel-web spider).